The following is a 257-amino-acid chain: Envelope glycoprotein (257 aa).

Residues 1-229 (FPILPGVWVD…EWAIHLLKGL (229 aa)) are Extracellular-facing. N-linked (GlcNAc...) asparagine; by host glycosylation is found at N15, N58, and N68. The interval 95-115 (GPTARIFASILAPGVAAAQAL) is fusion peptide. The stretch at 112-162 (AQALREIERLACWSVKQANLTTSLLGDLLDDVTSIRHAVLQNRAAIDFLLL) forms a coiled coil. N-linked (GlcNAc...) asparagine; by host glycosylation is present at N130. The tract at residues 151–167 (LQNRAAIDFLLLAHGHG) is immunosuppression. Residue N178 is glycosylated (N-linked (GlcNAc...) asparagine; by host). The stretch at 180-210 (SDHSEAIQKKFQLMKEHVNKIGVDSDPIGSW) forms a coiled coil. Residues 230-250 (LLGLVVILLLVVCLPCLLQFV) form a helical membrane-spanning segment. C245 carries the S-palmitoyl cysteine; by host lipid modification. The Cytoplasmic segment spans residues 251–257 (SSSTRKM).

In terms of assembly, the mature envelope protein (Env) consists of a trimer of SU-TM heterodimers attached by noncovalent interactions or by a labile interchain disulfide bond. Specific enzymatic cleavages in vivo yield mature proteins. Envelope glycoproteins are synthesized as an inactive precursor that is N-glycosylated and processed likely by host cell furin or by a furin-like protease in the Golgi to yield the mature SU and TM proteins. The cleavage site between SU and TM requires the minimal sequence [KR]-X-[KR]-R. In terms of processing, the transmembrane protein is palmitoylated.

Its subcellular location is the virion membrane. The protein localises to the host cell membrane. In terms of biological role, the surface protein (SU) attaches the virus to the host cell by binding to its receptor. This interaction triggers the refolding of the transmembrane protein (TM) and is thought to activate its fusogenic potential by unmasking its fusion peptide. Fusion occurs at the host cell plasma membrane. The transmembrane protein (TM) acts as a class I viral fusion protein. Under the current model, the protein has at least 3 conformational states: pre-fusion native state, pre-hairpin intermediate state, and post-fusion hairpin state. During viral and target cell membrane fusion, the coiled coil regions (heptad repeats) assume a trimer-of-hairpins structure, positioning the fusion peptide in close proximity to the C-terminal region of the ectodomain. The formation of this structure appears to drive apposition and subsequent fusion of viral and target cell membranes. Membranes fusion leads to delivery of the nucleocapsid into the cytoplasm. The chain is Envelope glycoprotein (env) from Galliformes.